Consider the following 75-residue polypeptide: Small ribosomal subunit protein bS18 (75 aa).

Belongs to the bacterial ribosomal protein bS18 family. In terms of assembly, part of the 30S ribosomal subunit. Forms a tight heterodimer with protein bS6.

In terms of biological role, binds as a heterodimer with protein bS6 to the central domain of the 16S rRNA, where it helps stabilize the platform of the 30S subunit. The sequence is that of Small ribosomal subunit protein bS18 from Buchnera aphidicola subsp. Baizongia pistaciae (strain Bp).